The following is a 611-amino-acid chain: Glutamine--fructose-6-phosphate aminotransferase [isomerizing] (611 aa).

Cys-2 serves as the catalytic Nucleophile; for GATase activity. One can recognise a Glutamine amidotransferase type-2 domain in the interval 2 to 219 (CGIVGAIAER…EGDIAEIRRD (218 aa)). SIS domains follow at residues 287 to 427 (AAEL…VQKR) and 460 to 601 (VSEL…VDQP). The active-site For Fru-6P isomerization activity is Lys-606.

In terms of assembly, homodimer.

It localises to the cytoplasm. It catalyses the reaction D-fructose 6-phosphate + L-glutamine = D-glucosamine 6-phosphate + L-glutamate. Catalyzes the first step in hexosamine metabolism, converting fructose-6P into glucosamine-6P using glutamine as a nitrogen source. The protein is Glutamine--fructose-6-phosphate aminotransferase [isomerizing] of Pseudomonas aeruginosa (strain ATCC 15692 / DSM 22644 / CIP 104116 / JCM 14847 / LMG 12228 / 1C / PRS 101 / PAO1).